The following is a 569-amino-acid chain: Potassium-transporting ATPase potassium-binding subunit (569 aa).

10 helical membrane-spanning segments follow: residues 5–25 (GWAE…PLGV), 65–85 (GYAG…YAVL), 135–155 (LVLT…AAAL), 179–199 (LYVL…LGLP), 254–274 (LTNL…FFAF), 286–306 (ALVI…YWTE), 383–403 (GIAV…LMVG), 422–442 (LLTV…AAVL), 489–509 (MGVA…AMAG), and 528–548 (GGLF…LQFF).

Belongs to the KdpA family. As to quaternary structure, the system is composed of three essential subunits: KdpA, KdpB and KdpC.

The protein resides in the cell inner membrane. Part of the high-affinity ATP-driven potassium transport (or Kdp) system, which catalyzes the hydrolysis of ATP coupled with the electrogenic transport of potassium into the cytoplasm. This subunit binds the periplasmic potassium ions and delivers the ions to the membrane domain of KdpB through an intramembrane tunnel. This chain is Potassium-transporting ATPase potassium-binding subunit, found in Caulobacter sp. (strain K31).